We begin with the raw amino-acid sequence, 332 residues long: Probable farnesyl diphosphate synthase (332 aa).

Positions 75, 78, and 107 each coordinate isopentenyl diphosphate. Positions 114 and 120 each coordinate Mg(2+). A (2E)-geranyl diphosphate-binding site is contributed by Arg-125. Arg-126 is an isopentenyl diphosphate binding site. 3 residues coordinate (2E)-geranyl diphosphate: Lys-208, Gln-250, and Lys-267.

This sequence belongs to the FPP/GGPP synthase family. Mg(2+) is required as a cofactor.

Its subcellular location is the cytoplasm. The enzyme catalyses isopentenyl diphosphate + (2E)-geranyl diphosphate = (2E,6E)-farnesyl diphosphate + diphosphate. The chain is Probable farnesyl diphosphate synthase from Sinorhizobium fredii (strain NBRC 101917 / NGR234).